Reading from the N-terminus, the 426-residue chain is Glutamyl-tRNA reductase (426 aa).

Residues 49–52, Ser109, 114–116, and Gln120 each bind substrate; these read TCNR and EGQ. Cys50 serves as the catalytic Nucleophile. 189-194 lines the NADP(+) pocket; it reads GAGETG.

This sequence belongs to the glutamyl-tRNA reductase family. In terms of assembly, homodimer.

The catalysed reaction is (S)-4-amino-5-oxopentanoate + tRNA(Glu) + NADP(+) = L-glutamyl-tRNA(Glu) + NADPH + H(+). The protein operates within porphyrin-containing compound metabolism; protoporphyrin-IX biosynthesis; 5-aminolevulinate from L-glutamyl-tRNA(Glu): step 1/2. It participates in porphyrin-containing compound metabolism; chlorophyll biosynthesis. Functionally, catalyzes the NADPH-dependent reduction of glutamyl-tRNA(Glu) to glutamate 1-semialdehyde (GSA). This chain is Glutamyl-tRNA reductase, found in Chlorobium phaeobacteroides (strain BS1).